Here is an 86-residue protein sequence, read N- to C-terminus: uncharacterized protein (86 aa).

The protein to C.jejuni CJ0253.

This is an uncharacterized protein from Helicobacter pylori (strain J99 / ATCC 700824) (Campylobacter pylori J99).